Consider the following 106-residue polypeptide: 3-phenylpropionate/cinnamic acid dioxygenase ferredoxin subunit (106 aa).

One can recognise a Rieske domain in the interval 4 to 99; sequence IYACPVADVP…VHVEGGDIFI (96 aa). 4 residues coordinate [2Fe-2S] cluster: C42, H44, C62, and H65.

This sequence belongs to the bacterial ring-hydroxylating dioxygenase ferredoxin component family. In terms of assembly, this dioxygenase system consists of four proteins: the two subunits of the hydroxylase component (HcaE and HcaF), a ferredoxin (HcaC) and a ferredoxin reductase (HcaD). The cofactor is [2Fe-2S] cluster.

It functions in the pathway aromatic compound metabolism; 3-phenylpropanoate degradation. Its function is as follows. Part of the multicomponent 3-phenylpropionate dioxygenase, that converts 3-phenylpropionic acid (PP) and cinnamic acid (CI) into 3-phenylpropionate-dihydrodiol (PP-dihydrodiol) and cinnamic acid-dihydrodiol (CI-dihydrodiol), respectively. This protein seems to be a 2Fe-2S ferredoxin. The sequence is that of 3-phenylpropionate/cinnamic acid dioxygenase ferredoxin subunit from Escherichia coli O139:H28 (strain E24377A / ETEC).